We begin with the raw amino-acid sequence, 413 residues long: Transmembrane protein 237B (413 aa).

A disordered region spans residues 1-162; the sequence is MDPEAKVSSS…EDDDVITDPQ (162 aa). The segment covering 112-122 has biased composition (polar residues); sequence DLVSNGDTLDQ. The next 4 membrane-spanning stretches (helical) occupy residues 233-253, 274-294, 312-332, and 360-380; these read VIGL…IIVV, LAYP…VSAF, LSPV…SLSQ, and ILYP…LAWI.

This sequence belongs to the TMEM237 family.

Its subcellular location is the membrane. It localises to the cell projection. The protein localises to the cilium. Component of the transition zone in primary cilia. Required for ciliogenesis. The chain is Transmembrane protein 237B (tmem237b) from Danio rerio (Zebrafish).